A 217-amino-acid chain; its full sequence is Lectin ADEL (217 aa).

5 disulfides stabilise this stretch: Cys5–Cys187, Cys42–Cys68, Cys61–Cys77, Cys114–Cys135, and Cys142–Cys206. Asn30 carries N-linked (GlcNAc...) asparagine glycosylation. N-linked (GlcNAc...) asparagine glycans are attached at residues Asn102 and Asn126.

In terms of assembly, homodimer; disulfide-linked. In terms of processing, contains disulfide bonds.

In terms of biological role, binds in decreasing order of affinity: galacturonic acid, D-galactosamine, methyl-alpha-D-galactopyranoside and further galactose-containing carbohydrates. Has hemagglutinating activity against human and rabbit erythrocytes. The chain is Lectin ADEL from Aplysia dactylomela (Spotted sea hare).